The chain runs to 283 residues: Protoheme IX farnesyltransferase (283 aa).

A run of 7 helical transmembrane segments spans residues 13-33 (ISSV…PTGL), 35-55 (GGTL…VGTL), 90-110 (ILLV…LTAV), 156-176 (LGAG…PHFL), 208-228 (MIGF…TEAA), 230-250 (WIYG…TIVF), and 262-282 (VLKA…VDWF).

This sequence belongs to the UbiA prenyltransferase family. Protoheme IX farnesyltransferase subfamily.

The protein resides in the cell inner membrane. The enzyme catalyses heme b + (2E,6E)-farnesyl diphosphate + H2O = Fe(II)-heme o + diphosphate. It functions in the pathway porphyrin-containing compound metabolism; heme O biosynthesis; heme O from protoheme: step 1/1. In terms of biological role, converts heme B (protoheme IX) to heme O by substitution of the vinyl group on carbon 2 of heme B porphyrin ring with a hydroxyethyl farnesyl side group. The sequence is that of Protoheme IX farnesyltransferase from Salinibacter ruber (strain DSM 13855 / M31).